The following is a 240-amino-acid chain: tRNA pseudouridine synthase A (240 aa).

Asp50 acts as the Nucleophile in catalysis. Tyr109 is a substrate binding site.

Belongs to the tRNA pseudouridine synthase TruA family. Homodimer.

It catalyses the reaction uridine(38/39/40) in tRNA = pseudouridine(38/39/40) in tRNA. Formation of pseudouridine at positions 38, 39 and 40 in the anticodon stem and loop of transfer RNAs. This chain is tRNA pseudouridine synthase A, found in Campylobacter jejuni subsp. jejuni serotype O:6 (strain 81116 / NCTC 11828).